Here is a 213-residue protein sequence, read N- to C-terminus: Putative 3-methyladenine DNA glycosylase (213 aa).

Belongs to the DNA glycosylase MPG family.

The chain is Putative 3-methyladenine DNA glycosylase from Latilactobacillus sakei subsp. sakei (strain 23K) (Lactobacillus sakei subsp. sakei).